Here is a 432-residue protein sequence, read N- to C-terminus: Cyclic GMP-AMP synthase-like receptor (432 aa).

Residues Ser59 and Glu71–Asp73 each bind ATP. Mg(2+) is bound by residues Glu71, Asp73, and Asp205. Residues Asp205 and Lys255 to Glu262 each bind GTP. Residues Ser259–Glu262, Lys284, and Thr303–Lys307 contribute to the ATP site.

The protein belongs to the mab-21 family. The cofactor is Mg(2+). Mn(2+) is required as a cofactor.

It catalyses the reaction GTP + ATP = 2',3'-cGAMP + 2 diphosphate. The enzyme catalyses GTP + ATP = pppGp(2'-5')A + diphosphate. It carries out the reaction pppGp(2'-5')A = 2',3'-cGAMP + diphosphate. In terms of biological role, nucleotidyltransferase that catalyzes the formation of cyclic GMP-AMP (2',3'-cGAMP) from ATP and GTP and plays a key role in innate immunity. Directly binds some unknown ligand, activating the nucleotidyltransferase activity, leading to synthesis of 2',3'-cGAMP, a second messenger that binds to and activates Sting, thereby triggering the immune response via activation of the NF-kappa-B transcription factor. This Pocillopora damicornis (Cauliflower coral) protein is Cyclic GMP-AMP synthase-like receptor.